Here is a 316-residue protein sequence, read N- to C-terminus: Ribosomal RNA small subunit methyltransferase H (316 aa).

S-adenosyl-L-methionine-binding positions include 35–37 (AGH), Asp55, Phe84, Asp105, and Gln112.

Belongs to the methyltransferase superfamily. RsmH family.

It localises to the cytoplasm. It catalyses the reaction cytidine(1402) in 16S rRNA + S-adenosyl-L-methionine = N(4)-methylcytidine(1402) in 16S rRNA + S-adenosyl-L-homocysteine + H(+). Specifically methylates the N4 position of cytidine in position 1402 (C1402) of 16S rRNA. This chain is Ribosomal RNA small subunit methyltransferase H, found in Streptococcus pneumoniae serotype 4 (strain ATCC BAA-334 / TIGR4).